Here is a 138-residue protein sequence, read N- to C-terminus: Small ribosomal subunit protein bS18m (138 aa).

The protein belongs to the bacterial ribosomal protein bS18 family. In terms of assembly, component of the mitochondrial small ribosomal subunit. Mature mitochondrial ribosomes consist of a small (37S) and a large (54S) subunit. The 37S subunit contains at least 33 different proteins and 1 molecule of RNA (15S). The 54S subunit contains at least 45 different proteins and 1 molecule of RNA (21S).

The protein localises to the mitochondrion. This Saccharomyces cerevisiae (strain RM11-1a) (Baker's yeast) protein is Small ribosomal subunit protein bS18m (RSM18).